Reading from the N-terminus, the 611-residue chain is Phosphatidylinositol 3,4,5-trisphosphate 3-phosphatase and protein-tyrosine-phosphatase PTEN2A (611 aa).

Disordered stretches follow at residues 1-42 and 87-109; these read MSSE…GVAS and GIRL…SSAT. Position 91 is a phosphoserine (Ser-91). Residues 100-109 are compositionally biased toward low complexity; sequence TTTEGTSSAT. In terms of domain architecture, Phosphatase tensin-type spans 145–324; it reads RRYQEGGFDL…KYFERILTYF (180 aa). Catalysis depends on Cys-263, which acts as the Phosphocysteine intermediate. The region spanning 331-458 is the C2 tensin-type domain; that stretch reads GRRCMLRGFR…FMVEVVLADI (128 aa). Over residues 462 to 486 the composition is skewed to polar residues; the sequence is IPTNPSSETASKTPEETSAANSSPV. The interval 462–589 is disordered; it reads IPTNPSSETA…VNASSSSESE (128 aa). Basic and acidic residues predominate over residues 495–507; the sequence is PDKETENPDKDDV. A Phosphoserine modification is found at Ser-509. Composition is skewed to polar residues over residues 514–530 and 549–565; these read DSTG…SQTP and VSIS…QGVT.

Belongs to the PTEN phosphatase protein family. As to expression, expressed in seedlings, roots, stems, leaves, flowers and siliques. However, at protein level, not observed in older leaves and mature siliques.

It catalyses the reaction O-phospho-L-tyrosyl-[protein] + H2O = L-tyrosyl-[protein] + phosphate. The catalysed reaction is a 1,2-diacyl-sn-glycero-3-phospho-(1D-myo-inositol-3,4,5-trisphosphate) + H2O = a 1,2-diacyl-sn-glycero-3-phospho-(1D-myo-inositol-4,5-bisphosphate) + phosphate. In terms of biological role, binds phosphatidic acid. Protein tyrosine phosphatase that also exhibits lipid phosphatase activity. Hydrolyzed poorly p-nitrophenyl phosphate (p-NPP). Can use PtdIns isomers as substrates. Removes efficiently phosphate from the D3 position of the inositol ring, less from the D4 position and not at all from the D5 position on monophosphorylated PtdIns isomers (PIPs). The presence of a phosphate group in the D5 position on PIP(2) isomers reduces lipid phosphatase activity. Mostly active on PtdIns(3)P and PtdIns(3,4)P(2), to a lower extent, on PtdIns(4)P and PtdIns(3,5)P(2), but barely against PtdIns(3,4,5)P(3) as substrate. The polypeptide is Phosphatidylinositol 3,4,5-trisphosphate 3-phosphatase and protein-tyrosine-phosphatase PTEN2A (Arabidopsis thaliana (Mouse-ear cress)).